The following is a 633-amino-acid chain: Glutamyl-tRNA(Gln) amidotransferase subunit E (633 aa).

It belongs to the GatB/GatE family. GatE subfamily. In terms of assembly, heterodimer of GatD and GatE.

It catalyses the reaction L-glutamyl-tRNA(Gln) + L-glutamine + ATP + H2O = L-glutaminyl-tRNA(Gln) + L-glutamate + ADP + phosphate + H(+). Functionally, allows the formation of correctly charged Gln-tRNA(Gln) through the transamidation of misacylated Glu-tRNA(Gln) in organisms which lack glutaminyl-tRNA synthetase. The reaction takes place in the presence of glutamine and ATP through an activated gamma-phospho-Glu-tRNA(Gln). The GatDE system is specific for glutamate and does not act on aspartate. The sequence is that of Glutamyl-tRNA(Gln) amidotransferase subunit E from Methanococcus vannielii (strain ATCC 35089 / DSM 1224 / JCM 13029 / OCM 148 / SB).